Reading from the N-terminus, the 306-residue chain is uncharacterized protein (306 aa).

8 consecutive transmembrane segments (helical) span residues 7-27 (LESWFFIAPALLLAVLSGYLA), 30-50 (VGIINIAINGGMVFGGLFMAL), 68-88 (LFITIPLSVLFSSVIGCLFAL), 95-115 (ADHVIVGTGINLLASGITLFI), 144-164 (AIGVFVFSLLLIGFVWYLMSF), 194-214 (IGAICSMMVAGLSGSLFVLSV), 232-252 (IAIMIISMWRIIPSIFIGLIF), and 274-294 (TIPFIISLLVMLLFGFLNVAP).

It is found in the cell membrane. This is an uncharacterized protein from Mycoplasma genitalium (strain ATCC 33530 / DSM 19775 / NCTC 10195 / G37) (Mycoplasmoides genitalium).